We begin with the raw amino-acid sequence, 293 residues long: Pantothenate synthetase (293 aa).

ATP is bound at residue 30–37; the sequence is MGYLHKGH. The active-site Proton donor is the His37. Gln61 contacts (R)-pantoate. Gln61 contributes to the beta-alanine binding site. Residue 147-150 coordinates ATP; that stretch reads GEKD. Residue Gln153 coordinates (R)-pantoate. ATP-binding positions include Val176 and 184 to 187; that span reads CSSR.

The protein belongs to the pantothenate synthetase family. As to quaternary structure, homodimer.

The protein resides in the cytoplasm. It catalyses the reaction (R)-pantoate + beta-alanine + ATP = (R)-pantothenate + AMP + diphosphate + H(+). It functions in the pathway cofactor biosynthesis; (R)-pantothenate biosynthesis; (R)-pantothenate from (R)-pantoate and beta-alanine: step 1/1. Catalyzes the condensation of pantoate with beta-alanine in an ATP-dependent reaction via a pantoyl-adenylate intermediate. This is Pantothenate synthetase from Brucella abortus (strain S19).